A 331-amino-acid chain; its full sequence is Oxygen-evolving enhancer protein 1-2, chloroplastic (331 aa).

The N-terminal 57 residues, 1–57 (MATSLQAAATFLQPAKIAASPSRNVHLRSNQTVGKSFGLDSSQARLTCSLHSDLKDF), are a transit peptide targeting the chloroplast. Residues 58-84 (AGKCSDAAKIAGFALATSALVVSGAGA) constitute a thylakoid transit peptide.

This sequence belongs to the PsbO family.

It localises to the plastid. Its subcellular location is the chloroplast thylakoid membrane. Its function is as follows. Stabilizes the manganese cluster which is the primary site of water splitting. Regulates dephosphorylation and turnover of the PSII reaction center D1 protein. This Arabidopsis thaliana (Mouse-ear cress) protein is Oxygen-evolving enhancer protein 1-2, chloroplastic (PSBO2).